The following is a 120-amino-acid chain: Transcription elongation factor SPT4 (120 aa).

The interval 1–39 (MSASVPADLRNLRACLLCSLVKSVESFQKEGCENCEDVL) is interaction with spt-5. The C4-type zinc-finger motif lies at 15–35 (CLLCSLVKSVESFQKEGCENC).

Belongs to the SPT4 family. As to quaternary structure, interacts with spt-5 to form DSIF. DSIF interacts with RNA polymerase II and with the positive transcription elongation factor b complex (P-TEFb complex), which is composed of cdk-9 and cyclin-T (cit-1.1 or cit-1.2).

The protein localises to the nucleus. Its function is as follows. May function as a component of the DRB sensitivity-inducing factor complex (DSIF complex), which regulates transcription elongation by RNA polymerase II. DSIF may enhance transcriptional pausing at sites proximal to the promoter, which may in turn facilitate the assembly of an elongation competent RNA polymerase II complex. This is Transcription elongation factor SPT4 (spt-4) from Caenorhabditis elegans.